The primary structure comprises 335 residues: Biotin synthase (335 aa).

Residues 47–276 form the Radical SAM core domain; that stretch reads FYGKKVKLNM…SKEIRISGGR (230 aa). Cysteine 65, cysteine 69, and cysteine 72 together coordinate [4Fe-4S] cluster. [2Fe-2S] cluster contacts are provided by cysteine 109, cysteine 141, cysteine 201, and arginine 271.

Belongs to the radical SAM superfamily. Biotin synthase family. In terms of assembly, homodimer. Requires [4Fe-4S] cluster as cofactor. It depends on [2Fe-2S] cluster as a cofactor.

The enzyme catalyses (4R,5S)-dethiobiotin + (sulfur carrier)-SH + 2 reduced [2Fe-2S]-[ferredoxin] + 2 S-adenosyl-L-methionine = (sulfur carrier)-H + biotin + 2 5'-deoxyadenosine + 2 L-methionine + 2 oxidized [2Fe-2S]-[ferredoxin]. Its pathway is cofactor biosynthesis; biotin biosynthesis; biotin from 7,8-diaminononanoate: step 2/2. Catalyzes the conversion of dethiobiotin (DTB) to biotin by the insertion of a sulfur atom into dethiobiotin via a radical-based mechanism. In Bacillus subtilis (strain 168), this protein is Biotin synthase.